The following is a 277-amino-acid chain: MSSGMHVALVTGGNKGIGLAIVRDLCRLFSGDVVLTARDVARGQAAVQQLQAEGLSPRFHQLDIDDLQSIRALRDFLRKEYGGLDVLVNNAGIAFKVADPTPFHIQAEVTMKTNFFGTRDVCTELLPLIKPQGRVVNVSSIMSVRALKSCSPELQQKFRSETITEEELVGLMNKFVEDTKKGVHQKEGWPSSAYGVTKIGVTVLSRIHARKLSEQRKGDRILLNACCPGWVRTDMAGPKATKSPEEGAETPVYLALLPPDAEGPHGQFVSEKRVEQW.

Residue Ser-2 is modified to N-acetylserine. Phosphoserine occurs at positions 2 and 30. NADP(+)-binding positions include 10-34, 63-64, and Asn-90; these read VTGG…GDVV and DI. Glutathione is bound by residues 95–97 and Gln-106; that span reads FKV. Ser-140 contacts substrate. 193-194 lines the glutathione pocket; the sequence is AY. Catalysis depends on Tyr-194, which acts as the Proton acceptor. Residues 194–198 and 231–233 contribute to the NADP(+) site; these read YGVTK and VRT. An N6-1-carboxyethyl lysine modification is found at Lys-239.

Belongs to the short-chain dehydrogenases/reductases (SDR) family. In terms of assembly, monomer.

The protein localises to the cytoplasm. It catalyses the reaction a secondary alcohol + NADP(+) = a ketone + NADPH + H(+). The catalysed reaction is prostaglandin F2alpha + NADP(+) = prostaglandin E2 + NADPH + H(+). The enzyme catalyses prostaglandin E1 + NADP(+) = 15-oxoprostaglandin E1 + NADPH + H(+). It carries out the reaction menadione + NADPH + H(+) = menadiol + NADP(+). It catalyses the reaction prostaglandin D2 + NADP(+) = 15-oxoprostaglandin D2 + NADPH + H(+). The catalysed reaction is prostaglandin E2 + NADP(+) = 15-oxoprostaglandin E2 + NADPH + H(+). The enzyme catalyses prostaglandin F2alpha + NADP(+) = 15-oxoprostaglandin F2alpha + NADPH + H(+). It carries out the reaction daunorubicin + NADPH + H(+) = 13-dihydrodaunorubicin + NADP(+). It catalyses the reaction S-nitrosoglutathione + NADPH + H(+) = S-(hydroxysulfenamide)glutathione + NADP(+). The catalysed reaction is a primary alcohol + NADP(+) = an aldehyde + NADPH + H(+). The enzyme catalyses cortisol + NADPH + H(+) = 20beta-dihydrocortisol + NADP(+). It carries out the reaction corticosterone + NADPH + H(+) = 20beta-dihydrocorticosterone + NADP(+). Its function is as follows. NADPH-dependent reductase with broad substrate specificity. Catalyzes the reduction of a wide variety of carbonyl compounds including quinones, prostaglandins, menadione, plus various xenobiotics. Catalyzes the reduction of the antitumor anthracyclines doxorubicin and daunorubicin to the cardiotoxic compounds doxorubicinol and daunorubicinol. Can convert prostaglandin E to prostaglandin F2-alpha. Can bind glutathione, which explains its higher affinity for glutathione-conjugated substrates. Catalyzes the reduction of S-nitrosoglutathione. In addition, participates in the glucocorticoid metabolism by catalyzing the NADPH-dependent cortisol/corticosterone into 20beta-dihydrocortisol (20b-DHF) or 20beta-corticosterone (20b-DHB), which are weak agonists of NR3C1 and NR3C2 in adipose tissue. This Pongo abelii (Sumatran orangutan) protein is Carbonyl reductase [NADPH] 1.